Here is a 435-residue protein sequence, read N- to C-terminus: Chromatin structure-remodeling complex subunit RSC7 (435 aa).

Residues 1-97 (MSDSEGGLAS…DKGVTRSRNR (97 aa)) are disordered. Positions 30 to 66 (DTEDLDIDENDENEDDDYREEEANEGVNEEEISDEEE) are enriched in acidic residues. Residue serine 86 is modified to Phosphoserine. Positions 248–435 (ELRTKGNVIE…QNFEKCNEYI (188 aa)) are functional region; able to complement all NPL6 null allele phenotypes.

The protein belongs to the RSC7/SWP82 family. RSC7 subfamily. As to quaternary structure, interacts with ARP7, ARP9, RSC3, RSC8, RSC30 and STH1. Component of the two forms of the RSC complex composed of at least either RSC1 or RSC2, and ARP7, ARP9, LDB7, NPL6, RSC3, RSC30, RSC4, RSC58, RSC6, RSC8, RSC9, SFH1, STH1, HTL1 and probably RTT102. The complexes interact with histone and histone variant components of centromeric chromatin. Component of a fungal-specific module (HTL1-LDB7-NPL6-RSC3-RSC30) within the RSC complex.

It is found in the nucleus. In terms of biological role, component of the chromatin structure remodeling complex (RSC), which is involved in transcription regulation and nucleosome positioning. RSC is responsible for the transfer of a histone octamer from a nucleosome core particle to naked DNA. The reaction requires ATP and involves an activated RSC-nucleosome intermediate. Remodeling reaction also involves DNA translocation, DNA twist and conformational change. As a reconfigurer of centromeric and flanking nucleosomes, RSC complex is required both for proper kinetochore function in chromosome segregation and, via a PKC1-dependent signaling pathway, for organization of the cellular cytoskeleton. Together with HTL1, LDB7, RSC3, RSC30 components, defines a fungal-specific module within the RSC complex that plays a role in many cellular functions including the maintenance of cell wall integrity. Acidic protein important for nuclear protein localization. This chain is Chromatin structure-remodeling complex subunit RSC7 (NPL6), found in Saccharomyces cerevisiae (strain ATCC 204508 / S288c) (Baker's yeast).